The primary structure comprises 586 residues: Estrogen receptor (586 aa).

The modulating stretch occupies residues 1–179 (MTMPLPNKTT…SMESTKETRY (179 aa)). Residues 144-173 (FYRSSSDNRRQSGRERMSSANDKGPPSMES) are disordered. Over residues 149–160 (SDNRRQSGRERM) the composition is skewed to basic and acidic residues. 2 consecutive NR C4-type zinc fingers follow at residues 180 to 200 (CAVC…CEGC) and 216 to 240 (CPAT…LRKC). A DNA-binding region (nuclear receptor) is located at residues 180 to 245 (CAVCSDYASG…RLRKCYEVGM (66 aa)). The hinge stretch occupies residues 246–302 (MKGGIRKDRRGGRLLKHKRQKEEQEQKNDVDPSEIRTASIWVNPSVKSMKLSPVLSL). The span at 252-264 (KDRRGGRLLKHKR) shows a compositional bias: basic residues. The tract at residues 252–276 (KDRRGGRLLKHKRQKEEQEQKNDVD) is disordered. Over residues 265-276 (QKEEQEQKNDVD) the composition is skewed to basic and acidic residues. Positions 303 to 539 (TAEQLISALM…DLLLEMLDAH (237 aa)) constitute an NR LBD domain. Basic and acidic residues predominate over residues 543-556 (TPKDKTTTQEEDSR). The interval 543-569 (TPKDKTTTQEEDSRSPPTTTVNGASPC) is disordered.

It belongs to the nuclear hormone receptor family. NR3 subfamily. Binds DNA as a homodimer. Can form a heterodimer with ER-beta.

The protein resides in the nucleus. Its function is as follows. The steroid hormones and their receptors are involved in the regulation of eukaryotic gene expression and affect cellular proliferation and differentiation in target tissues. In Xenopus laevis (African clawed frog), this protein is Estrogen receptor (esr1).